Consider the following 336-residue polypeptide: Fructose-1,6-bisphosphatase class 1 (336 aa).

The Mg(2+) site is built by glutamate 92, aspartate 115, leucine 117, and aspartate 118. Substrate contacts are provided by residues 118–121, asparagine 211, tyrosine 244, 262–264, and lysine 274; these read DGSS and YLY. Glutamate 280 is a Mg(2+) binding site.

The protein belongs to the FBPase class 1 family. Homotetramer. Mg(2+) is required as a cofactor.

The protein resides in the cytoplasm. It catalyses the reaction beta-D-fructose 1,6-bisphosphate + H2O = beta-D-fructose 6-phosphate + phosphate. The protein operates within carbohydrate biosynthesis; gluconeogenesis. In Vibrio cholerae serotype O1 (strain ATCC 39541 / Classical Ogawa 395 / O395), this protein is Fructose-1,6-bisphosphatase class 1.